Here is a 413-residue protein sequence, read N- to C-terminus: Calmodulin-binding protein CmbB (413 aa).

6 FNIP repeats span residues 104-148, 149-192, 222-257, 258-301, 304-343, and 344-386; these read FNHP…LSDC, YNQA…LGKG, SLPP…FGDG, FNQP…FHQF, FSQT…FSEK, and YNHP…LNGY.

As to quaternary structure, interacts with calmodulin in the presence of Ca(2+).

The chain is Calmodulin-binding protein CmbB from Dictyostelium discoideum (Social amoeba).